The chain runs to 318 residues: Pyrimidine-specific ribonucleoside hydrolase RihA (318 aa).

His240 is a catalytic residue.

Belongs to the IUNH family. RihA subfamily.

Functionally, hydrolyzes cytidine or uridine to ribose and cytosine or uracil, respectively. The polypeptide is Pyrimidine-specific ribonucleoside hydrolase RihA (Shewanella sp. (strain MR-7)).